A 142-amino-acid polypeptide reads, in one-letter code: Large ribosomal subunit protein bL17 (142 aa).

Belongs to the bacterial ribosomal protein bL17 family. As to quaternary structure, part of the 50S ribosomal subunit. Contacts protein L32.

In Protochlamydia amoebophila (strain UWE25), this protein is Large ribosomal subunit protein bL17.